A 402-amino-acid polypeptide reads, in one-letter code: MRHTWRWFGPVDRVSVQDAAQAGAHGIVSALHHIPTGDVWPVDEIGKRQEEVRAGGLEWEVVESVPVSECIKTQTGPWREHVANWQETLRRLSAAGIRTVCYNFMPVLDWTRTDLRWTARHGAKAMRFDRIDFAAFDIHLLERPAAHEDYDTATREAAERRFREMTEERRLALSRNIGAGLPGSADGYSLPQLREHLRTYDGVSREKLQRHLVEFLAEVAPVAERTGINICAHPDDPPWALLGLPRILSNAEDYAFMLREVDSPANGVTLCTGSLGALAANDLPAMTRQFASRIHFVHLRNVLREEVRTPCSFYEDEHLEGDTDMVAVIAELLQEEQRRRAAGRVDHQIPMRPDHGQEILDDLSRGAQPGYPAIGRLKGLAELRGIERALSHATYGLSAATR.

Belongs to the mannonate dehydratase family. Fe(2+) serves as cofactor. Requires Mn(2+) as cofactor.

It catalyses the reaction D-mannonate = 2-dehydro-3-deoxy-D-gluconate + H2O. It participates in carbohydrate metabolism; pentose and glucuronate interconversion. Functionally, catalyzes the dehydration of D-mannonate. The polypeptide is Mannonate dehydratase (Rhizobium meliloti (strain 1021) (Ensifer meliloti)).